Reading from the N-terminus, the 161-residue chain is Cyclic pyranopterin monophosphate synthase (161 aa).

Substrate contacts are provided by residues 75 to 77 and 115 to 116; these read MCH and ME. The active site involves aspartate 130.

It belongs to the MoaC family. As to quaternary structure, homohexamer; trimer of dimers.

It carries out the reaction (8S)-3',8-cyclo-7,8-dihydroguanosine 5'-triphosphate = cyclic pyranopterin phosphate + diphosphate. It participates in cofactor biosynthesis; molybdopterin biosynthesis. In terms of biological role, catalyzes the conversion of (8S)-3',8-cyclo-7,8-dihydroguanosine 5'-triphosphate to cyclic pyranopterin monophosphate (cPMP). This Bacillus mycoides (strain KBAB4) (Bacillus weihenstephanensis) protein is Cyclic pyranopterin monophosphate synthase.